The sequence spans 335 residues: Transaldolase (335 aa).

The Schiff-base intermediate with substrate role is filled by lysine 135.

Belongs to the transaldolase family. Type 1 subfamily. As to quaternary structure, homodimer.

It is found in the cytoplasm. It carries out the reaction D-sedoheptulose 7-phosphate + D-glyceraldehyde 3-phosphate = D-erythrose 4-phosphate + beta-D-fructose 6-phosphate. It participates in carbohydrate degradation; pentose phosphate pathway; D-glyceraldehyde 3-phosphate and beta-D-fructose 6-phosphate from D-ribose 5-phosphate and D-xylulose 5-phosphate (non-oxidative stage): step 2/3. Its function is as follows. Transaldolase is important for the balance of metabolites in the pentose-phosphate pathway. In Prochlorococcus marinus (strain SARG / CCMP1375 / SS120), this protein is Transaldolase.